Consider the following 422-residue polypeptide: Zinc finger protein zfp-2 (422 aa).

The disordered stretch occupies residues 95–119 (AIPCTSSSMQPSTSSNPSSGEHQPV). The span at 99 to 113 (TSSSMQPSTSSNPSS) shows a compositional bias: low complexity. C2H2-type zinc fingers lie at residues 171-194 (YRCTNCKTYFGNKEVYQRHIQEVH), 200-222 (FRCFNCGMRFANKTSMTHHLKDH), 229-251 (FSCDYCPRIFSKLESKTRHHKMH), 255-278 (STCQTCMRFFTTEDALRHHQSTAH), 300-322 (YSCSYCNLRFHFKKDMLVHERIH), 328-350 (YSCGYCMKSFAQSQALTAHIRTH), and 356-379 (YGCGKCDKRFRDNSCLRKHELAAH).

As to expression, expressed in vulval cells and all somatic gonad structures such as spermatheca, sheath cells, uterine cells and distal tip cells.

The protein localises to the nucleus. Its function is as follows. Probable zinc finger transcription factor that acts as a transcriptional repressor. Acts redundantly with the transcriptional repressor lin-35 to control the development of somatic gonad lineages. May, in addition, suppress sensitivity to RNAi. The protein is Zinc finger protein zfp-2 of Caenorhabditis elegans.